The chain runs to 643 residues: Threonine--tRNA ligase (643 aa).

The TGS domain occupies 1–61; that stretch reads MIKVTLKDGS…KEDVSLSICT (61 aa). Positions 240–540 are catalytic; it reads DHNKLGRELK…LIEKYAGAFP (301 aa). Zn(2+)-binding residues include Cys-335, His-386, and His-517.

This sequence belongs to the class-II aminoacyl-tRNA synthetase family. Homodimer. Requires Zn(2+) as cofactor.

Its subcellular location is the cytoplasm. It carries out the reaction tRNA(Thr) + L-threonine + ATP = L-threonyl-tRNA(Thr) + AMP + diphosphate + H(+). Its function is as follows. Catalyzes the attachment of threonine to tRNA(Thr) in a two-step reaction: L-threonine is first activated by ATP to form Thr-AMP and then transferred to the acceptor end of tRNA(Thr). Also edits incorrectly charged L-seryl-tRNA(Thr). This is Threonine--tRNA ligase from Clostridium botulinum (strain Eklund 17B / Type B).